The following is a 472-amino-acid chain: Uronate isomerase (472 aa).

Belongs to the metallo-dependent hydrolases superfamily. Uronate isomerase family.

The catalysed reaction is D-glucuronate = D-fructuronate. It carries out the reaction aldehydo-D-galacturonate = keto-D-tagaturonate. It functions in the pathway carbohydrate metabolism; pentose and glucuronate interconversion. This Shouchella clausii (strain KSM-K16) (Alkalihalobacillus clausii) protein is Uronate isomerase.